Here is a 188-residue protein sequence, read N- to C-terminus: MATYSSNDFRSGLKIMFEGEPYAIESSEFVKPGKGQAFARVKMRRLLTGSRVEKTFKSTDSAEGADVVDTNMNYLYNDGEFYHFMHPETFEQHQVEEKTVGDSAKWLQDNAECIVTLWDGRAIAVQPPNFIEAEITDTDPGLKGDTAGTGGKPATLSTGAVVKVPLFVQIGEVVRVDTRSGEYVSRVK.

Lys34 bears the N6-(3,6-diaminohexanoyl)-5-hydroxylysine mark.

It belongs to the elongation factor P family. May be beta-lysylated on the epsilon-amino group of Lys-34 by the combined action of EpmA and EpmB, and then hydroxylated on the C5 position of the same residue by EpmC (if this protein is present). Lysylation is critical for the stimulatory effect of EF-P on peptide-bond formation. The lysylation moiety may extend toward the peptidyltransferase center and stabilize the terminal 3-CCA end of the tRNA. Hydroxylation of the C5 position on Lys-34 may allow additional potential stabilizing hydrogen-bond interactions with the P-tRNA.

It localises to the cytoplasm. Its pathway is protein biosynthesis; polypeptide chain elongation. Its function is as follows. Involved in peptide bond synthesis. Alleviates ribosome stalling that occurs when 3 or more consecutive Pro residues or the sequence PPG is present in a protein, possibly by augmenting the peptidyl transferase activity of the ribosome. Modification of Lys-34 is required for alleviation. The protein is Elongation factor P of Pectobacterium carotovorum subsp. carotovorum (strain PC1).